The primary structure comprises 156 residues: Transcription elongation factor GreA (156 aa).

This sequence belongs to the GreA/GreB family.

Its function is as follows. Necessary for efficient RNA polymerase transcription elongation past template-encoded arresting sites. The arresting sites in DNA have the property of trapping a certain fraction of elongating RNA polymerases that pass through, resulting in locked ternary complexes. Cleavage of the nascent transcript by cleavage factors such as GreA or GreB allows the resumption of elongation from the new 3'terminus. GreA releases sequences of 2 to 3 nucleotides. This is Transcription elongation factor GreA from Thermomicrobium roseum (strain ATCC 27502 / DSM 5159 / P-2).